Reading from the N-terminus, the 1279-residue chain is ATP-dependent helicase/nuclease subunit A (1279 aa).

Positions 4-499 (TKWTDEQRQA…VKLFKNFRSR (496 aa)) constitute a UvrD-like helicase ATP-binding domain. ATP is bound at residue 25-32 (AGAGAGKT). Residues 526–853 (EEALKVGASY…RIMSIHKSKG (328 aa)) form the UvrD-like helicase C-terminal domain.

The protein belongs to the helicase family. AddA subfamily. As to quaternary structure, heterodimer of AddA and AddB/RexB. Requires Mg(2+) as cofactor.

It carries out the reaction Couples ATP hydrolysis with the unwinding of duplex DNA by translocating in the 3'-5' direction.. The enzyme catalyses ATP + H2O = ADP + phosphate + H(+). Its function is as follows. The heterodimer acts as both an ATP-dependent DNA helicase and an ATP-dependent, dual-direction single-stranded exonuclease. Recognizes the chi site generating a DNA molecule suitable for the initiation of homologous recombination. The AddA nuclease domain is required for chi fragment generation; this subunit has the helicase and 3' -&gt; 5' nuclease activities. The chain is ATP-dependent helicase/nuclease subunit A from Clostridium botulinum (strain Loch Maree / Type A3).